The sequence spans 425 residues: Septin-11 (425 aa).

Ala2 is subject to N-acetylalanine. Ser9 is modified (phosphoserine). One can recognise a Septin-type G domain in the interval 38–304 (QGFCFNILCV…ELYRRCKLEE (267 aa)). Residues 48 to 55 (GETGIGKS) are G1 motif. Residues 48-55 (GETGIGKS), Gly103, 184-192 (KADTIAKNE), Gly238, and Arg253 contribute to the GTP site. Residues 100–103 (DTVG) form a G3 motif region. The segment at 183 to 186 (AKAD) is G4 motif. A coiled-coil region spans residues 320–410 (QETYEAKRNE…AAQLLQSQAQ (91 aa)). Residues 399 to 425 (KAAAQLLQSQAQQSGAQQTKKDKDKKN) form a disordered region. The span at 401 to 416 (AAQLLQSQAQQSGAQQ) shows a compositional bias: low complexity.

This sequence belongs to the TRAFAC class TrmE-Era-EngA-EngB-Septin-like GTPase superfamily. Septin GTPase family. Septins polymerize into heterooligomeric protein complexes that form filaments, and can associate with cellular membranes, actin filaments and microtubules. Forms homooligomers. GTPase activity is required for filament formation. Interacts with SEPTIN7, SEPTIN9 and SEPTIN12.

Its subcellular location is the cytoplasm. The protein localises to the cytoskeleton. It is found in the synapse. It localises to the cell projection. The protein resides in the dendritic spine. Its subcellular location is the axon. Functionally, filament-forming cytoskeletal GTPase. May play a role in cytokinesis (Potential). May play a role in the cytoarchitecture of neurons, including dendritic arborization and dendritic spines, and in GABAergic synaptic connectivity. This is Septin-11 from Bos taurus (Bovine).